A 139-amino-acid chain; its full sequence is Diuretic hormone 41 (139 aa).

The N-terminal stretch at 1–20 (MMWWALWCAVVVAAGSGVAA) is a signal peptide. The propeptide occupies 21–79 (APAPDSLSPLDMVQMDSSAPDDETLYAMSPMAARYSAGAPWLYLLADMPRDSQTGSGRV). At Ile-122 the chain carries Isoleucine amide.

It belongs to the sauvagine/corticotropin-releasing factor/urotensin I family. Expressed in corpora cardiaca (CC), corpora allata (CA), antennal lobe (AL) and gnathal ganglion (GNG) (at protein level). Expression in CC and CA detected in all animals, in GNG in most animals, expression in AL detected in few animals (at protein level).

It is found in the secreted. Regulation of fluid secretion. This Agrotis ipsilon (Black cutworm moth) protein is Diuretic hormone 41.